A 90-amino-acid polypeptide reads, in one-letter code: LYR motif-containing protein 2 (90 aa).

Residues 1–19 (MASSRLPASALTLKQFIQR) constitute a mitochondrion transit peptide.

The protein belongs to the complex I LYR family.

The protein localises to the mitochondrion. Involved in efficient integration of the N-module into mitochondrial respiratory chain complex I. The chain is LYR motif-containing protein 2 (lyrm2) from Salmo salar (Atlantic salmon).